Here is a 715-residue protein sequence, read N- to C-terminus: Fatty acid oxidation complex subunit alpha (715 aa).

Residues 1 to 190 form an enoyl-CoA hydratase/isomerase region; the sequence is MIYEGKAITV…KVGAVDAVVA (190 aa). Residue D297 participates in substrate binding. Residues 312–715 are 3-hydroxyacyl-CoA dehydrogenase; that stretch reads HDVKQAAVLG…MAKNGQRFFN (404 aa). NAD(+)-binding positions include M325, D344, 401 to 403, K408, and S430; that span reads VVE. The For 3-hydroxyacyl-CoA dehydrogenase activity role is filled by H451. An NAD(+)-binding site is contributed by N454. Substrate is bound by residues N501 and Y660.

The protein in the N-terminal section; belongs to the enoyl-CoA hydratase/isomerase family. In the C-terminal section; belongs to the 3-hydroxyacyl-CoA dehydrogenase family. Heterotetramer of two alpha chains (FadB) and two beta chains (FadA).

The catalysed reaction is a (3S)-3-hydroxyacyl-CoA + NAD(+) = a 3-oxoacyl-CoA + NADH + H(+). It catalyses the reaction a (3S)-3-hydroxyacyl-CoA = a (2E)-enoyl-CoA + H2O. It carries out the reaction a 4-saturated-(3S)-3-hydroxyacyl-CoA = a (3E)-enoyl-CoA + H2O. The enzyme catalyses (3S)-3-hydroxybutanoyl-CoA = (3R)-3-hydroxybutanoyl-CoA. The catalysed reaction is a (3Z)-enoyl-CoA = a 4-saturated (2E)-enoyl-CoA. It catalyses the reaction a (3E)-enoyl-CoA = a 4-saturated (2E)-enoyl-CoA. Its pathway is lipid metabolism; fatty acid beta-oxidation. Involved in the aerobic and anaerobic degradation of long-chain fatty acids via beta-oxidation cycle. Catalyzes the formation of 3-oxoacyl-CoA from enoyl-CoA via L-3-hydroxyacyl-CoA. It can also use D-3-hydroxyacyl-CoA and cis-3-enoyl-CoA as substrate. This is Fatty acid oxidation complex subunit alpha from Pseudomonas putida (strain GB-1).